The primary structure comprises 336 residues: Prenytransferase ascA (336 aa).

The segment at 1-26 (MAAKSRSPKRGTSEKTPLVEKEAPYQ) is disordered. The span at 11 to 23 (GTSEKTPLVEKEA) shows a compositional bias: basic and acidic residues. 8 helical membrane-spanning segments follow: residues 52–72 (PHGN…ASAI), 74–94 (PTEL…TFLM), 131–151 (GHVF…SLPI), 179–199 (VILG…VGLP), 206–226 (FVPT…YDVV), 251–271 (LEGL…TLGY), 272–292 (LVGM…FGLV), and 314–334 (FAIL…DYVV).

This sequence belongs to the UbiA prenyltransferase family. Mg(2+) is required as a cofactor.

Its subcellular location is the membrane. The catalysed reaction is orsellinate + (2E,6E)-farnesyl diphosphate = ilicicolinate B + diphosphate. It functions in the pathway secondary metabolite biosynthesis; terpenoid biosynthesis. Functionally, prenytransferase; part of the asc-1 gene cluster that mediates the biosynthesis of both ascochlorin and ascofuranone, a strong inhibitor of cyanide-insensitive alternative oxidases and a promising drug candidate against African trypanosomiasis. The first step in the pathway is performed by the non-reducing polyketide synthase ascC that produces orsellinic acid by condensing acetyl-CoA with 3 malonyl-CoA units. Orsellinic acid is then prenylated by the prenyltransferase ascA to yield ilicicolinic acid B. Ilicicolinic acid B is further reduced to ilicicolin B by the reductase ascB. The halogenase ascD then chlorinates ilicicolin B to produce ilicicolin A which is converted to ilicicolin A epoxide by the cytochrome P450 monooxygenase ascE that catalyzes stereoselective epoxidation of the terminal double bond of the prenyl group. Ilicicolin A epoxide is the last common precursor for the biosynthesis of ascofuranone and ascochlorin. The terpene cyclase ascF produces a monocyclic terpene, and the cyclization reaction is proposed to be initiated by protonation of the terminal epoxide of ilicicolin A epoxide to generate a monocyclic tertiarycation, which is followed by a series of hydride and methyl shifts with abstraction of proton, leading to the formation of the (14S,15R,19R)-trimethylcyclohexanone ring structure of ilicicolin C, which is finally reduced to ascochlorin by the dehydrogenase ascG. On the other hand, ilicicolin A epoxide is hydroxylated by the cytochrome P450 monooxygenase ascH, and the resultant product is cyclized by the terpene cyclase ascI to ascofuranol via protonation-initiated epoxide ring opening, which facilitates the 6-endo-tet cyclization to form the tetrahy-drofuran ring. Finally, ascofuranol is oxidized into ascofuranone by ascJ. This is Prenytransferase ascA from Acremonium egyptiacum (Oospora egyptiaca).